Consider the following 90-residue polypeptide: Sec-independent protein translocase protein TatA (90 aa).

A helical membrane pass occupies residues 1-21 (MGLPGGWELVLIVGVLVLLFG). Over residues 42–60 (EARGMKEDEEAAKREKQAK) the composition is skewed to basic and acidic residues. The segment at 42 to 90 (EARGMKEDEEAAKREKQAKSEPQQLTAGESSAPTVASPVEETQRNDSKK) is disordered. Over residues 61-75 (SEPQQLTAGESSAPT) the composition is skewed to polar residues.

It belongs to the TatA/E family. The Tat system comprises two distinct complexes: a TatABC complex, containing multiple copies of TatA, TatB and TatC subunits, and a separate TatA complex, containing only TatA subunits. Substrates initially bind to the TatABC complex, which probably triggers association of the separate TatA complex to form the active translocon.

The protein localises to the cell membrane. Functionally, part of the twin-arginine translocation (Tat) system that transports large folded proteins containing a characteristic twin-arginine motif in their signal peptide across membranes. TatA could form the protein-conducting channel of the Tat system. This chain is Sec-independent protein translocase protein TatA, found in Saccharopolyspora erythraea (strain ATCC 11635 / DSM 40517 / JCM 4748 / NBRC 13426 / NCIMB 8594 / NRRL 2338).